Consider the following 202-residue polypeptide: Holliday junction resolvase RecU (202 aa).

Residues threonine 85, aspartate 87, glutamate 100, and glutamine 119 each coordinate Mg(2+).

The protein belongs to the RecU family. Requires Mg(2+) as cofactor.

It localises to the cytoplasm. The enzyme catalyses Endonucleolytic cleavage at a junction such as a reciprocal single-stranded crossover between two homologous DNA duplexes (Holliday junction).. Its function is as follows. Endonuclease that resolves Holliday junction intermediates in genetic recombination. Cleaves mobile four-strand junctions by introducing symmetrical nicks in paired strands. Promotes annealing of linear ssDNA with homologous dsDNA. Required for DNA repair, homologous recombination and chromosome segregation. The chain is Holliday junction resolvase RecU from Streptococcus pyogenes serotype M5 (strain Manfredo).